The following is a 130-amino-acid chain: Small ribosomal subunit protein uS9 (130 aa).

The protein belongs to the universal ribosomal protein uS9 family.

The protein is Small ribosomal subunit protein uS9 of Pseudomonas fluorescens (strain ATCC BAA-477 / NRRL B-23932 / Pf-5).